Reading from the N-terminus, the 321-residue chain is Ribonucleoside-diphosphate reductase small subunit (321 aa).

Residues aspartate 78, glutamate 108, and histidine 111 each contribute to the Fe cation site. Tyrosine 115 is an active-site residue. Residues 165 to 185 (ILMILIEGLFFASSFASIAYL) traverse the membrane as a helical segment. Glutamate 171, glutamate 205, and histidine 208 together coordinate Fe cation.

Belongs to the ribonucleoside diphosphate reductase small chain family. As to quaternary structure, heterotetramer composed of a homodimer of the large subunit (R1) and a homodimer of the small subunit (R2). Larger multisubunit protein complex are also active, composed of (R1)n(R2)n. It depends on Fe cation as a cofactor.

Its subcellular location is the host membrane. The catalysed reaction is a 2'-deoxyribonucleoside 5'-diphosphate + [thioredoxin]-disulfide + H2O = a ribonucleoside 5'-diphosphate + [thioredoxin]-dithiol. Ribonucleoside-diphosphate reductase holoenzyme provides the precursors necessary for viral DNA synthesis. Allows virus growth in non-dividing cells, as well as reactivation from latency in infected hosts. Catalyzes the biosynthesis of deoxyribonucleotides from the corresponding ribonucleotides. The polypeptide is Ribonucleoside-diphosphate reductase small subunit (Equus caballus (Horse)).